A 201-amino-acid polypeptide reads, in one-letter code: Orotate phosphoribosyltransferase (201 aa).

5-phospho-alpha-D-ribose 1-diphosphate is bound by residues Lys-90 and 113-121 (EDIITTGGS). The orotate site is built by Thr-117 and Arg-145.

It belongs to the purine/pyrimidine phosphoribosyltransferase family. PyrE subfamily. In terms of assembly, homodimer. It depends on Mg(2+) as a cofactor.

It catalyses the reaction orotidine 5'-phosphate + diphosphate = orotate + 5-phospho-alpha-D-ribose 1-diphosphate. The protein operates within pyrimidine metabolism; UMP biosynthesis via de novo pathway; UMP from orotate: step 1/2. In terms of biological role, catalyzes the transfer of a ribosyl phosphate group from 5-phosphoribose 1-diphosphate to orotate, leading to the formation of orotidine monophosphate (OMP). In Sulfurovum sp. (strain NBC37-1), this protein is Orotate phosphoribosyltransferase.